The chain runs to 561 residues: MKETIIELLEAAGTQLKQQGILPADAPLTVKVEPTKDKAHGDYASNLALTLAKPAGRKPRDLAEALVAALPPSDAIRQVDIAGPGFINFFAATDAAAQVVPAILDAGDTFGRSLSGAGEKVQVEFVSANPTGPLHVGHGRGAAIGDCLCRLLEATGFEVTREFYYNDAGAQIQNLALSVQARVQGLTPDDAAWPEDGYRGAYINDVAQAYLAGETVVADDRDVTASAAPDDLDAIRDFAVAYLRREQDLDLKAFGVAFDVYFLESSLYDDGKVDATVKALVEGGHTYEEDGATWLRTTDFGDDKDRVMRKKDGGYTYFLPDVAYHLDKWQRGFTTVINEQGADHHSTVTRVRAGLQALEAGIPQGWPDYVLHQMVLVTRSGVEVKLSKRAGSYVTLRDLIDEVGRDATRFFLAARRSDSQLTFDIDLARSQSNDNPVYYIQYAHARVCSVMRRAQDAGKAFDRDLAMQHLGRLDAPQEKELMNRLARYPEVVERAARMREPQQVAQYLMDLAADFHTCYNAVKVMVEDDELRNARLALGLATRQVIRNGLDLMGVSAPEEM.

A 'HIGH' region motif is present at residues 128 to 138 (ANPTGPLHVGH).

This sequence belongs to the class-I aminoacyl-tRNA synthetase family. As to quaternary structure, monomer.

It is found in the cytoplasm. It catalyses the reaction tRNA(Arg) + L-arginine + ATP = L-arginyl-tRNA(Arg) + AMP + diphosphate. The polypeptide is Arginine--tRNA ligase (Chromohalobacter salexigens (strain ATCC BAA-138 / DSM 3043 / CIP 106854 / NCIMB 13768 / 1H11)).